Reading from the N-terminus, the 377-residue chain is MRRLNRKKTLSLVKELDAFPKVPESYVETSASGGTVSLIAFTTMALLTIMEFSVYQDTWMKYEYEVDKDFSSKLRINIDITVAMKCQYVGADVLDLAETMVASADGLVYEPAVFDLSPQQKEWQRMLQLTQSRLQEEHSLQDVIFKSAFKSASTALPPREDDSSQSPDACRIHGHLYVNKVAGNFHITVGKAIPHPRGHAHLAALVNHESYNFSHRIDHLSFGELVPAIINPLDGTEKIAIDHNQMFQYFITVVPTKLHTYKISADTHQFSVTERERIINHAAGSHGVSGIFMKYDLSSLMVTVTEEHMPFWQFFVRLCGIVGGIFSTTGMLHGIGKFIVEIICCRFRLGSYKPVNSVPFEDGHTDNHLPLLENNTH.

The Cytoplasmic portion of the chain corresponds to methionine 1–glycine 33. The helical transmembrane segment at glycine 34–valine 54 threads the bilayer. Topologically, residues tyrosine 55 to cysteine 319 are lumenal. Residues glycine 320–valine 340 form a helical membrane-spanning segment. Residues glutamate 341–histidine 377 lie on the Cytoplasmic side of the membrane.

The protein belongs to the ERGIC family. May form a heteromeric complex composed of ERGIC1, ERGIC2 and ERGIC3. Interacts with ERGIC3, the interaction is required for the stable expression of both proteins. May interact with EEF1A1.

The protein resides in the endoplasmic reticulum-Golgi intermediate compartment membrane. The protein localises to the golgi apparatus. It is found in the cis-Golgi network membrane. Its subcellular location is the endoplasmic reticulum membrane. It localises to the cytoplasm. The protein resides in the nucleus. Its function is as follows. Possible role in transport between endoplasmic reticulum and Golgi. The chain is Endoplasmic reticulum-Golgi intermediate compartment protein 2 (ERGIC2) from Macaca fascicularis (Crab-eating macaque).